We begin with the raw amino-acid sequence, 36 residues long: Kappa-isophellitoxin-Tst1a (36 aa).

The region spanning 2–36 is the ShKT domain; that stretch reads CENNFSDRECERRKKDCDSSMKFRELSCPKTCGTC. Cystine bridges form between Cys-2–Cys-36, Cys-11–Cys-29, and Cys-18–Cys-33.

The protein belongs to the sea anemone type 1 potassium channel toxin family. Type 1a subfamily. In terms of tissue distribution, predominantly expressed in mesenterial filaments (at protein level), a morphological structure that has a functional role in prey killing and digestion. Also expressed in club-tips, tentacles, actinopharynx, body column, mesenterial filaments and pedal disk.

Its subcellular location is the secreted. The protein localises to the nematocyst. Its function is as follows. Probable toxin with unknown function. Does not inhibit all channels tested. Is not cytotoxic on macrophage. This chain is Kappa-isophellitoxin-Tst1a, found in Telmatactis stephensoni (Sea anemone).